We begin with the raw amino-acid sequence, 255 residues long: F-box/SPRY domain-containing protein 1 (255 aa).

Residues 3–51 (DRVAALCNYNVLEVVFSYLDLNDLGRCSQVCKSWFHFLNDENSDVWRFH) enclose the F-box domain. The B30.2/SPRY domain occupies 61 to 253 (TKSELLSPVP…VSMVYCGTPL (193 aa)).

This sequence belongs to the FBXO45/Fsn family. As to quaternary structure, component of an E3 ubiquitin ligase complex composed of hiw and Fsn.

It is found in the synapse. The protein operates within protein modification; protein ubiquitination. Functionally, required in the presynaptic motoneuron to down-regulate the levels of wnd and restrain synaptic terminal growth at the neuromuscular junction (NMJ). In Drosophila persimilis (Fruit fly), this protein is F-box/SPRY domain-containing protein 1.